The chain runs to 500 residues: Glycerol-3-phosphate acyltransferase 7 (500 aa).

2 helical membrane passes run 38-58 (GLIR…LDVL) and 235-255 (ALII…RIFV). Residues 298-303 (HRTLMD) carry the HXXXXD motif motif.

The protein belongs to the GPAT/DAPAT family. Weakly or not expressed in roots, leaves, seedlings, developing siliques and flower buds.

It localises to the membrane. It catalyses the reaction sn-glycerol 3-phosphate + an acyl-CoA = a 1-acyl-sn-glycero-3-phosphate + CoA. Its pathway is phospholipid metabolism; CDP-diacylglycerol biosynthesis; CDP-diacylglycerol from sn-glycerol 3-phosphate: step 1/3. In terms of biological role, esterifies acyl-group from acyl-ACP to the sn-1 position of glycerol-3-phosphate, an essential step in glycerolipid biosynthesis. This is Glycerol-3-phosphate acyltransferase 7 (GPAT7) from Arabidopsis thaliana (Mouse-ear cress).